We begin with the raw amino-acid sequence, 508 residues long: Photosystem II CP47 reaction center protein (508 aa).

A run of 6 helical transmembrane segments spans residues 21-36 (SVHIMHTALVAGWAGS), 101-115 (IVFSGLCFLAAIWHW), 140-156 (GIHLFLSGVACFGFGAF), 203-218 (IAAGTLGILAGLFHLS), 237-252 (VLSSSIAAVFFAAFVV), and 457-472 (SFALLFFFGHIWHGAR).

The protein belongs to the PsbB/PsbC family. PsbB subfamily. PSII is composed of 1 copy each of membrane proteins PsbA, PsbB, PsbC, PsbD, PsbE, PsbF, PsbH, PsbI, PsbJ, PsbK, PsbL, PsbM, PsbT, PsbX, PsbY, PsbZ, Psb30/Ycf12, at least 3 peripheral proteins of the oxygen-evolving complex and a large number of cofactors. It forms dimeric complexes. Binds multiple chlorophylls. PSII binds additional chlorophylls, carotenoids and specific lipids. serves as cofactor.

The protein resides in the plastid. It localises to the chloroplast thylakoid membrane. One of the components of the core complex of photosystem II (PSII). It binds chlorophyll and helps catalyze the primary light-induced photochemical processes of PSII. PSII is a light-driven water:plastoquinone oxidoreductase, using light energy to abstract electrons from H(2)O, generating O(2) and a proton gradient subsequently used for ATP formation. In Lemna minor (Common duckweed), this protein is Photosystem II CP47 reaction center protein.